Here is a 122-residue protein sequence, read N- to C-terminus: Basic phospholipase A2 PLA-B (122 aa).

7 cysteine pairs are disulfide-bonded: cysteine 26–cysteine 115, cysteine 28–cysteine 44, cysteine 43–cysteine 95, cysteine 49–cysteine 122, cysteine 50–cysteine 88, cysteine 57–cysteine 81, and cysteine 75–cysteine 86. Ca(2+) contacts are provided by tyrosine 27, glycine 29, and glycine 31. Residue histidine 47 is part of the active site. Aspartate 48 provides a ligand contact to Ca(2+). Aspartate 89 is an active-site residue.

The protein belongs to the phospholipase A2 family. Group II subfamily. D49 sub-subfamily. The cofactor is Ca(2+). In terms of tissue distribution, expressed by the venom gland.

The protein localises to the secreted. It catalyses the reaction a 1,2-diacyl-sn-glycero-3-phosphocholine + H2O = a 1-acyl-sn-glycero-3-phosphocholine + a fatty acid + H(+). Snake venom phospholipase A2 (PLA2) that displays edema-inducing activities. PLA-B is three times more active than PLA-A in edema-inducing activities. PLA2 catalyzes the calcium-dependent hydrolysis of the 2-acyl groups in 3-sn-phosphoglycerides. This chain is Basic phospholipase A2 PLA-B, found in Protobothrops flavoviridis (Habu).